The sequence spans 116 residues: Ribosome-binding factor A (116 aa).

This sequence belongs to the RbfA family. As to quaternary structure, monomer. Binds 30S ribosomal subunits, but not 50S ribosomal subunits or 70S ribosomes.

The protein resides in the cytoplasm. One of several proteins that assist in the late maturation steps of the functional core of the 30S ribosomal subunit. Associates with free 30S ribosomal subunits (but not with 30S subunits that are part of 70S ribosomes or polysomes). Required for efficient processing of 16S rRNA. May interact with the 5'-terminal helix region of 16S rRNA. This Streptococcus uberis (strain ATCC BAA-854 / 0140J) protein is Ribosome-binding factor A.